The chain runs to 180 residues: Molybdopterin synthase catalytic subunit (180 aa).

Residues 123–124, Lys-139, and 146–148 contribute to the substrate site; these read HR and KLE. The segment at 161–180 is disordered; that stretch reads RDGQKGVKVEGGKEGVEAKH.

The protein belongs to the MoaE family. MOCS2B subfamily. In terms of assembly, heterotetramer; composed of 2 small (MOCS2A) and 2 large (MOCS2B) subunits.

The protein localises to the cytoplasm. The catalysed reaction is 2 [molybdopterin-synthase sulfur-carrier protein]-C-terminal-Gly-aminoethanethioate + cyclic pyranopterin phosphate + H2O = molybdopterin + 2 [molybdopterin-synthase sulfur-carrier protein]-C-terminal Gly-Gly + 2 H(+). It functions in the pathway cofactor biosynthesis; molybdopterin biosynthesis. In terms of biological role, catalytic subunit of the molybdopterin synthase complex, a complex that catalyzes the conversion of precursor Z into molybdopterin. Acts by mediating the incorporation of 2 sulfur atoms from thiocarboxylated MOCS2A into precursor Z to generate a dithiolene group. This Pyrenophora tritici-repentis (strain Pt-1C-BFP) (Wheat tan spot fungus) protein is Molybdopterin synthase catalytic subunit.